A 1198-amino-acid polypeptide reads, in one-letter code: Chromosome partition protein Smc (1198 aa).

40–47 (PNGSGKSN) serves as a coordination point for ATP. Coiled coils occupy residues 175–211 (ITKY…GQLG) and 322–524 (LGEQ…LAKK). Residues 534-647 (CGTLADLLQV…VTDMEAATRV (114 aa)) form the SMC hinge domain. Residues 687–1042 (SREIQELRQE…AELDKTMSER (356 aa)) are a coiled coil. The segment at 785–818 (AEEQSKLTDSIQEAQEALARQEEKNRQASREMEQ) is disordered. Residues 803–818 (ARQEEKNRQASREMEQ) show a composition bias toward basic and acidic residues.

Belongs to the SMC family. Homodimer.

It is found in the cytoplasm. Its function is as follows. Required for chromosome condensation and partitioning. The sequence is that of Chromosome partition protein Smc from Desulfitobacterium hafniense (strain Y51).